Reading from the N-terminus, the 205-residue chain is Dephospho-CoA kinase (205 aa).

Positions Val-15–Ile-205 constitute a DPCK domain. ATP is bound at residue Ala-23–Thr-28.

This sequence belongs to the CoaE family.

The protein localises to the cytoplasm. It catalyses the reaction 3'-dephospho-CoA + ATP = ADP + CoA + H(+). Its pathway is cofactor biosynthesis; coenzyme A biosynthesis; CoA from (R)-pantothenate: step 5/5. Catalyzes the phosphorylation of the 3'-hydroxyl group of dephosphocoenzyme A to form coenzyme A. The sequence is that of Dephospho-CoA kinase from Gloeobacter violaceus (strain ATCC 29082 / PCC 7421).